A 78-amino-acid polypeptide reads, in one-letter code: Acyl carrier protein (78 aa).

The 76-residue stretch at 2–77 folds into the Carrier domain; that stretch reads SDTEERVKKI…DAVKFIDKAS (76 aa). O-(pantetheine 4'-phosphoryl)serine is present on Ser37.

This sequence belongs to the acyl carrier protein (ACP) family. In terms of processing, 4'-phosphopantetheine is transferred from CoA to a specific serine of apo-ACP by AcpS. This modification is essential for activity because fatty acids are bound in thioester linkage to the sulfhydryl of the prosthetic group.

It is found in the cytoplasm. It participates in lipid metabolism; fatty acid biosynthesis. Functionally, carrier of the growing fatty acid chain in fatty acid biosynthesis. The protein is Acyl carrier protein of Bartonella bacilliformis (strain ATCC 35685 / KC583 / Herrer 020/F12,63).